The following is a 180-amino-acid chain: Acireductone dioxygenase (180 aa).

Positions 97, 99, 103, and 141 each coordinate Fe(2+). Ni(2+) is bound by residues His97, His99, Glu103, and His141.

This sequence belongs to the acireductone dioxygenase (ARD) family. Monomer. The cofactor is Fe(2+). Ni(2+) serves as cofactor.

The catalysed reaction is 1,2-dihydroxy-5-(methylsulfanyl)pent-1-en-3-one + O2 = 3-(methylsulfanyl)propanoate + CO + formate + 2 H(+). The enzyme catalyses 1,2-dihydroxy-5-(methylsulfanyl)pent-1-en-3-one + O2 = 4-methylsulfanyl-2-oxobutanoate + formate + 2 H(+). It functions in the pathway amino-acid biosynthesis; L-methionine biosynthesis via salvage pathway; L-methionine from S-methyl-5-thio-alpha-D-ribose 1-phosphate: step 5/6. Functionally, catalyzes 2 different reactions between oxygen and the acireductone 1,2-dihydroxy-3-keto-5-methylthiopentene (DHK-MTPene) depending upon the metal bound in the active site. Fe-containing acireductone dioxygenase (Fe-ARD) produces formate and 2-keto-4-methylthiobutyrate (KMTB), the alpha-ketoacid precursor of methionine in the methionine recycle pathway. Ni-containing acireductone dioxygenase (Ni-ARD) produces methylthiopropionate, carbon monoxide and formate, and does not lie on the methionine recycle pathway. This is Acireductone dioxygenase from Klebsiella pneumoniae subsp. pneumoniae (strain ATCC 700721 / MGH 78578).